A 731-amino-acid polypeptide reads, in one-letter code: Ribonuclease R (731 aa).

The RNB domain maps to Arg-260 to Phe-589. One can recognise an S1 motif domain in the interval Gly-647 to Tyr-728.

It belongs to the RNR ribonuclease family. RNase R subfamily. As to quaternary structure, monomer.

It is found in the cytoplasm. It carries out the reaction Exonucleolytic cleavage in the 3'- to 5'-direction to yield nucleoside 5'-phosphates.. Its function is as follows. 3'-5' exoribonuclease that releases 5'-nucleoside monophosphates and is involved in maturation of structured RNAs. The polypeptide is Ribonuclease R (Buchnera aphidicola subsp. Acyrthosiphon pisum (strain APS) (Acyrthosiphon pisum symbiotic bacterium)).